The primary structure comprises 424 residues: UDP-N-acetylglucosamine 1-carboxyvinyltransferase (424 aa).

Residue 22 to 23 participates in phosphoenolpyruvate binding; that stretch reads KN. UDP-N-acetyl-alpha-D-glucosamine is bound at residue arginine 98. The active-site Proton donor is cysteine 122. The residue at position 122 (cysteine 122) is a 2-(S-cysteinyl)pyruvic acid O-phosphothioketal. UDP-N-acetyl-alpha-D-glucosamine is bound by residues 127 to 131, aspartate 312, and isoleucine 334; that span reads RPVDQ.

Belongs to the EPSP synthase family. MurA subfamily.

It localises to the cytoplasm. It carries out the reaction phosphoenolpyruvate + UDP-N-acetyl-alpha-D-glucosamine = UDP-N-acetyl-3-O-(1-carboxyvinyl)-alpha-D-glucosamine + phosphate. Its pathway is cell wall biogenesis; peptidoglycan biosynthesis. Its function is as follows. Cell wall formation. Adds enolpyruvyl to UDP-N-acetylglucosamine. In Xanthomonas axonopodis pv. citri (strain 306), this protein is UDP-N-acetylglucosamine 1-carboxyvinyltransferase.